Consider the following 297-residue polypeptide: Tyrosine recombinase XerD (297 aa).

In terms of domain architecture, Core-binding (CB) spans 1–86 (MNDLIEDFLH…SLRSFFHYLM (86 aa)). A Tyr recombinase domain is found at 107–291 (GLPKVLNLDD…TKLRLKDVYK (185 aa)). Residues Arg-147, Lys-171, His-243, Arg-246, and His-269 contribute to the active site. Tyr-278 serves as the catalytic O-(3'-phospho-DNA)-tyrosine intermediate.

Belongs to the 'phage' integrase family. XerD subfamily. As to quaternary structure, forms a cyclic heterotetrameric complex composed of two molecules of XerC and two molecules of XerD.

It localises to the cytoplasm. Site-specific tyrosine recombinase, which acts by catalyzing the cutting and rejoining of the recombining DNA molecules. The XerC-XerD complex is essential to convert dimers of the bacterial chromosome into monomers to permit their segregation at cell division. It also contributes to the segregational stability of plasmids. In Listeria monocytogenes serovar 1/2a (strain ATCC BAA-679 / EGD-e), this protein is Tyrosine recombinase XerD.